A 229-amino-acid polypeptide reads, in one-letter code: Adenylate kinase (229 aa).

The propeptide occupies methionine 1–phenylalanine 9. Glycine 25 to threonine 30 is an ATP binding site. Positions serine 45–valine 74 are NMP. AMP-binding positions include threonine 46, arginine 51, glycine 72–valine 74, glycine 100–arginine 103, and glutamine 107. The interval glycine 141 to aspartate 178 is LID. An ATP-binding site is contributed by arginine 142. AMP is bound by residues arginine 175 and arginine 186. ATP is bound at residue glycine 214.

Belongs to the adenylate kinase family.

Its subcellular location is the hydrogenosome. The catalysed reaction is AMP + ATP = 2 ADP. In terms of biological role, catalyzes the reversible transfer of the terminal phosphate group between ATP and AMP. Plays an important role in cellular energy homeostasis and in adenine nucleotide metabolism. The chain is Adenylate kinase from Trichomonas vaginalis.